Here is a 288-residue protein sequence, read N- to C-terminus: Homoserine kinase (288 aa).

78–88 serves as a coordination point for ATP; that stretch reads PLARGLGSSSS.

Belongs to the GHMP kinase family. Homoserine kinase subfamily.

Its subcellular location is the cytoplasm. It carries out the reaction L-homoserine + ATP = O-phospho-L-homoserine + ADP + H(+). Its pathway is amino-acid biosynthesis; L-threonine biosynthesis; L-threonine from L-aspartate: step 4/5. Catalyzes the ATP-dependent phosphorylation of L-homoserine to L-homoserine phosphate. This is Homoserine kinase from Streptococcus mutans serotype c (strain ATCC 700610 / UA159).